The chain runs to 368 residues: D-alanine--D-alanine ligase (368 aa).

In terms of domain architecture, ATP-grasp spans 141 to 350 (KMIWDYSGLP…YNELIMHLIE (210 aa)). 176-231 (EKDLEYPLFIKPCRAGSSVGAGMVKNRNELLEQAEESFLWDNKILVEACIEAREVE) contacts ATP. Mg(2+) is bound by residues aspartate 303, glutamate 317, and asparagine 319.

The protein belongs to the D-alanine--D-alanine ligase family. The cofactor is Mg(2+). Mn(2+) is required as a cofactor.

It localises to the cytoplasm. It catalyses the reaction 2 D-alanine + ATP = D-alanyl-D-alanine + ADP + phosphate + H(+). Its pathway is cell wall biogenesis; peptidoglycan biosynthesis. Functionally, cell wall formation. This chain is D-alanine--D-alanine ligase, found in Treponema denticola (strain ATCC 35405 / DSM 14222 / CIP 103919 / JCM 8153 / KCTC 15104).